The sequence spans 177 residues: Large ribosomal subunit protein uL6 (177 aa).

Belongs to the universal ribosomal protein uL6 family. As to quaternary structure, part of the 50S ribosomal subunit.

In terms of biological role, this protein binds to the 23S rRNA, and is important in its secondary structure. It is located near the subunit interface in the base of the L7/L12 stalk, and near the tRNA binding site of the peptidyltransferase center. The protein is Large ribosomal subunit protein uL6 of Azoarcus sp. (strain BH72).